Consider the following 448-residue polypeptide: Tubulin beta chain (448 aa).

GTP is bound by residues Q11, E69, S138, G142, T143, G144, N204, and N226. E69 contributes to the Mg(2+) binding site. The disordered stretch occupies residues 429-448 (GIDEGDEDYEIEEEKEPLEY).

This sequence belongs to the tubulin family. In terms of assembly, dimer of alpha and beta chains. A typical microtubule is a hollow water-filled tube with an outer diameter of 25 nm and an inner diameter of 15 nM. Alpha-beta heterodimers associate head-to-tail to form protofilaments running lengthwise along the microtubule wall with the beta-tubulin subunit facing the microtubule plus end conferring a structural polarity. Microtubules usually have 13 protofilaments but different protofilament numbers can be found in some organisms and specialized cells. Requires Mg(2+) as cofactor.

It is found in the cytoplasm. The protein resides in the cytoskeleton. Its function is as follows. Tubulin is the major constituent of microtubules, a cylinder consisting of laterally associated linear protofilaments composed of alpha- and beta-tubulin heterodimers. Microtubules grow by the addition of GTP-tubulin dimers to the microtubule end, where a stabilizing cap forms. Below the cap, tubulin dimers are in GDP-bound state, owing to GTPase activity of alpha-tubulin. In Schizosaccharomyces pombe (strain 972 / ATCC 24843) (Fission yeast), this protein is Tubulin beta chain (nda3).